The sequence spans 118 residues: UPF0342 protein BPUM_0928 (118 aa).

This sequence belongs to the UPF0342 family.

This is UPF0342 protein BPUM_0928 from Bacillus pumilus (strain SAFR-032).